Here is a 180-residue protein sequence, read N- to C-terminus: Protein C2-DOMAIN ABA-RELATED 10 (180 aa).

The region spanning 1–105 (MDQKPLGLLT…EALKMGMELL (105 aa)) is the C2 domain. Positions 22, 23, 28, 74, 75, 76, and 82 each coordinate Ca(2+).

It belongs to the plant CAR protein family. In terms of assembly, binds to PYR/PYL/RCAR abscisic acid intracellular receptors in an ABA-independent manner, both at the plasma membrane and in the nucleus.

The protein resides in the cell membrane. It is found in the nucleus. Its function is as follows. Stimulates the GTPase/ATPase activities of Obg-like ATPases. Mediates the transient calcium-dependent interaction of PYR/PYL/RCAR abscisic acid (ABA) receptors with the plasma membrane and thus regulates ABA sensitivity. This Arabidopsis thaliana (Mouse-ear cress) protein is Protein C2-DOMAIN ABA-RELATED 10.